The chain runs to 545 residues: CTP synthase (545 aa).

The tract at residues 1-265 is amidoligase domain; the sequence is MNGIKHIFIT…DKFVIKHLDL (265 aa). A CTP-binding site is contributed by Ser15. Ser15 serves as a coordination point for UTP. ATP is bound by residues 16-21 and Asp73; that span reads SIGKGL. Asp73 and Glu141 together coordinate Mg(2+). CTP-binding positions include 148-150, 188-193, and Lys224; these read DIE and KTKPTQ. UTP is bound by residues 188–193 and Lys224; that span reads KTKPTQ. One can recognise a Glutamine amidotransferase type-1 domain in the interval 290–534; the sequence is EIAIIGKYTG…VAAALARKEI (245 aa). Gly349 lines the L-glutamine pocket. Residue Cys376 is the Nucleophile; for glutamine hydrolysis of the active site. Residues 377-380, Glu400, and Arg460 contribute to the L-glutamine site; that span reads LGMQ. Active-site residues include His507 and Glu509.

It belongs to the CTP synthase family. In terms of assembly, homotetramer.

It carries out the reaction UTP + L-glutamine + ATP + H2O = CTP + L-glutamate + ADP + phosphate + 2 H(+). The enzyme catalyses L-glutamine + H2O = L-glutamate + NH4(+). The catalysed reaction is UTP + NH4(+) + ATP = CTP + ADP + phosphate + 2 H(+). Its pathway is pyrimidine metabolism; CTP biosynthesis via de novo pathway; CTP from UDP: step 2/2. With respect to regulation, allosterically activated by GTP, when glutamine is the substrate; GTP has no effect on the reaction when ammonia is the substrate. The allosteric effector GTP functions by stabilizing the protein conformation that binds the tetrahedral intermediate(s) formed during glutamine hydrolysis. Inhibited by the product CTP, via allosteric rather than competitive inhibition. Catalyzes the ATP-dependent amination of UTP to CTP with either L-glutamine or ammonia as the source of nitrogen. Regulates intracellular CTP levels through interactions with the four ribonucleotide triphosphates. The protein is CTP synthase of Tropheryma whipplei (strain Twist) (Whipple's bacillus).